The primary structure comprises 173 residues: Large ribosomal subunit protein uL16 (173 aa).

Belongs to the universal ribosomal protein uL16 family.

The protein is Large ribosomal subunit protein uL16 of Methanococcus maripaludis (strain C5 / ATCC BAA-1333).